The primary structure comprises 173 residues: Myosin light chain 5 (173 aa).

The tract at residues 1-22 is disordered; that stretch reads MASRKTKKKEGGGLRAQRASSN. 3 EF-hand domains span residues 30–65, 100–135, and 136–171; these read TQIQ…LGKT, DAEE…QADK, and MTAE…GEEK. Residues D43, N45, D47, and D54 each contribute to the Ca(2+) site.

In terms of assembly, myosin is a hexamer of 2 heavy chains and 4 light chains. Jaw-closing muscles.

In Felis catus (Cat), this protein is Myosin light chain 5 (MYL5).